The following is a 930-amino-acid chain: Alanine--tRNA ligase (930 aa).

The Zn(2+) site is built by His595, His599, Cys700, and His704.

This sequence belongs to the class-II aminoacyl-tRNA synthetase family. The cofactor is Zn(2+).

Its subcellular location is the cytoplasm. It catalyses the reaction tRNA(Ala) + L-alanine + ATP = L-alanyl-tRNA(Ala) + AMP + diphosphate. Its function is as follows. Catalyzes the attachment of alanine to tRNA(Ala) in a two-step reaction: alanine is first activated by ATP to form Ala-AMP and then transferred to the acceptor end of tRNA(Ala). Also edits incorrectly charged Ser-tRNA(Ala) and Gly-tRNA(Ala) via its editing domain. The sequence is that of Alanine--tRNA ligase from Malacoplasma penetrans (strain HF-2) (Mycoplasma penetrans).